The chain runs to 411 residues: Lissencephaly-1 homolog (411 aa).

In terms of domain architecture, LisH spans Gln9–Thr41. Residues Thr56–Ala83 adopt a coiled-coil conformation. WD repeat units follow at residues Gly106–Lys147, Gly148–Lys187, Gly191–Thr230, Gly233–Glu272, Asp275–Thr334, Gly337–Thr376, and Ala379–Arg411.

The protein belongs to the WD repeat LIS1/nudF family.

Its subcellular location is the cytoplasm. It is found in the cytoskeleton. The protein localises to the microtubule organizing center. It localises to the centrosome. Positively regulates the activity of the minus-end directed microtubule motor protein dynein. May enhance dynein-mediated microtubule sliding by targeting dynein to the microtubule plus end. Required for several dynein- and microtubule-dependent processes. In Drosophila grimshawi (Hawaiian fruit fly), this protein is Lissencephaly-1 homolog.